We begin with the raw amino-acid sequence, 81 residues long: Large ribosomal subunit protein bL31B (81 aa).

The protein belongs to the bacterial ribosomal protein bL31 family. Type B subfamily. In terms of assembly, part of the 50S ribosomal subunit.

The sequence is that of Large ribosomal subunit protein bL31B from Exiguobacterium sibiricum (strain DSM 17290 / CCUG 55495 / CIP 109462 / JCM 13490 / 255-15).